A 148-amino-acid polypeptide reads, in one-letter code: uncharacterized protein (148 aa).

The HTH asnC-type domain occupies 4-65 (LDRVDMQLVK…IPDIDKLGYM (62 aa)). Residues 23–42 (YRELADILNTTRQRIARRID) constitute a DNA-binding region (H-T-H motif).

This is an uncharacterized protein from Pyrococcus horikoshii (strain ATCC 700860 / DSM 12428 / JCM 9974 / NBRC 100139 / OT-3).